Consider the following 222-residue polypeptide: MNSTPKAVVIFSGGQDSTTCLFQAIQEFGVENVEVVTFQYGQRHAIELEKAAWIAKDLGVKQTLIDTSVIKAITSNAMMEEHEIKQEGNTPNTFVDGRNALFLLYTAIYAKGQGIRTIFTGVCETDFSGYPDCRDVFVKSMNVTLNLAMDYNFNIRTPLMYLTKKQTWALADKLGAFDYIRQHTHTCYLGVEGGCHTCPSCVLREKGLNEYLSEKTSGQKNV.

Residue 11 to 21 (FSGGQDSTTCL) participates in ATP binding. 4 residues coordinate Zn(2+): Cys187, Cys195, Cys198, and Cys201.

This sequence belongs to the QueC family. The cofactor is Zn(2+).

It carries out the reaction 7-carboxy-7-deazaguanine + NH4(+) + ATP = 7-cyano-7-deazaguanine + ADP + phosphate + H2O + H(+). It functions in the pathway purine metabolism; 7-cyano-7-deazaguanine biosynthesis. Catalyzes the ATP-dependent conversion of 7-carboxy-7-deazaguanine (CDG) to 7-cyano-7-deazaguanine (preQ(0)). The sequence is that of 7-cyano-7-deazaguanine synthase from Actinobacillus pleuropneumoniae serotype 5b (strain L20).